The primary structure comprises 108 residues: Parvalbumin beta 1 (108 aa).

N-acetylalanine is present on A1. EF-hand domains follow at residues 38-73 (KXXD…FCPK) and 77-108 (LTDA…LVKQ). Residues D51, D53, S55, F57, E59, E62, D90, D92, D94, M96, and E101 each contribute to the Ca(2+) site.

It belongs to the parvalbumin family.

Its function is as follows. In muscle, parvalbumin is thought to be involved in relaxation after contraction. It binds two calcium ions. In Oncorhynchus mykiss (Rainbow trout), this protein is Parvalbumin beta 1.